Here is a 167-residue protein sequence, read N- to C-terminus: Keratin-associated protein 1-3 (167 aa).

It belongs to the KRTAP type 1 family. Interacts with hair keratins. In terms of tissue distribution, expressed in the middle/upper portions of the hair cortex, in the region termed the keratogenous zone.

Functionally, in the hair cortex, hair keratin intermediate filaments are embedded in an interfilamentous matrix, consisting of hair keratin-associated proteins (KRTAP), which are essential for the formation of a rigid and resistant hair shaft through their extensive disulfide bond cross-linking with abundant cysteine residues of hair keratins. The matrix proteins include the high-sulfur and high-glycine-tyrosine keratins. The sequence is that of Keratin-associated protein 1-3 (KRTAP1-3) from Homo sapiens (Human).